Reading from the N-terminus, the 209-residue chain is Large ribosomal subunit protein uL3 (209 aa).

Positions 119–145 are disordered; that stretch reads AIKRHGQSRGPMSHGSHFHRAPGSVGM.

This sequence belongs to the universal ribosomal protein uL3 family. In terms of assembly, part of the 50S ribosomal subunit. Forms a cluster with proteins L14 and L19.

One of the primary rRNA binding proteins, it binds directly near the 3'-end of the 23S rRNA, where it nucleates assembly of the 50S subunit. The polypeptide is Large ribosomal subunit protein uL3 (Staphylococcus aureus (strain COL)).